The following is a 483-amino-acid chain: Probable glycine dehydrogenase (decarboxylating) subunit 2 (483 aa).

The disordered stretch occupies residues 1 to 33 (MLIFEHSRKNRRNYSQAPATRPAKNNIPDHLKR). Lysine 264 carries the post-translational modification N6-(pyridoxal phosphate)lysine.

The protein belongs to the GcvP family. C-terminal subunit subfamily. As to quaternary structure, the glycine cleavage system is composed of four proteins: P, T, L and H. In this organism, the P 'protein' is a heterodimer of two subunits. The cofactor is pyridoxal 5'-phosphate.

The catalysed reaction is N(6)-[(R)-lipoyl]-L-lysyl-[glycine-cleavage complex H protein] + glycine + H(+) = N(6)-[(R)-S(8)-aminomethyldihydrolipoyl]-L-lysyl-[glycine-cleavage complex H protein] + CO2. In terms of biological role, the glycine cleavage system catalyzes the degradation of glycine. The P protein binds the alpha-amino group of glycine through its pyridoxal phosphate cofactor; CO(2) is released and the remaining methylamine moiety is then transferred to the lipoamide cofactor of the H protein. The polypeptide is Probable glycine dehydrogenase (decarboxylating) subunit 2 (Nitrosomonas europaea (strain ATCC 19718 / CIP 103999 / KCTC 2705 / NBRC 14298)).